We begin with the raw amino-acid sequence, 333 residues long: Nucleoid-associated protein APL_0429 (333 aa).

It belongs to the YejK family.

It localises to the cytoplasm. The protein localises to the nucleoid. The polypeptide is Nucleoid-associated protein APL_0429 (Actinobacillus pleuropneumoniae serotype 5b (strain L20)).